A 435-amino-acid chain; its full sequence is Chaperone SurA (435 aa).

An N-terminal signal peptide occupies residues 1–24 (MRLRSFAFLGFMLLVAMAPSMASA). 2 PpiC domains span residues 173 to 274 (DTAY…KLID) and 286 to 385 (VTEN…ELED).

The protein localises to the periplasm. It catalyses the reaction [protein]-peptidylproline (omega=180) = [protein]-peptidylproline (omega=0). Functionally, chaperone involved in the correct folding and assembly of outer membrane proteins. Recognizes specific patterns of aromatic residues and the orientation of their side chains, which are found more frequently in integral outer membrane proteins. May act in both early periplasmic and late outer membrane-associated steps of protein maturation. The protein is Chaperone SurA of Chromohalobacter salexigens (strain ATCC BAA-138 / DSM 3043 / CIP 106854 / NCIMB 13768 / 1H11).